Consider the following 228-residue polypeptide: Protein JAZ7 (228 aa).

The 36-residue stretch at 101-136 folds into the Tify domain; it reads LSPNESTLTIFYMGEVHIFPGISPEKAELIIDLVSK. A Jas motif is present at residues 176–199; sequence MARRATLARFLEKRKHRLIKARPY. The Nuclear localization signal signature appears at 177–184; the sequence is ARRATLAR.

This sequence belongs to the TIFY/JAZ family. In terms of assembly, interacts with MYC2 (via N-terminus). JAZ7 competes with MED25 for binding to MYC2. Interacts with MTB1 (via N-terminus).

It localises to the nucleus. In terms of biological role, repressor of jasmonate responses. This Solanum lycopersicum (Tomato) protein is Protein JAZ7.